Here is a 260-residue protein sequence, read N- to C-terminus: Triosephosphate isomerase (260 aa).

11-13 serves as a coordination point for substrate; that stretch reads NWK. The active-site Electrophile is His-103. Glu-175 acts as the Proton acceptor in catalysis. Substrate is bound by residues Gly-181, Ser-220, and 241 to 242; that span reads GG.

It belongs to the triosephosphate isomerase family. As to quaternary structure, homodimer.

Its subcellular location is the cytoplasm. It carries out the reaction D-glyceraldehyde 3-phosphate = dihydroxyacetone phosphate. It participates in carbohydrate biosynthesis; gluconeogenesis. The protein operates within carbohydrate degradation; glycolysis; D-glyceraldehyde 3-phosphate from glycerone phosphate: step 1/1. Involved in the gluconeogenesis. Catalyzes stereospecifically the conversion of dihydroxyacetone phosphate (DHAP) to D-glyceraldehyde-3-phosphate (G3P). In Shewanella amazonensis (strain ATCC BAA-1098 / SB2B), this protein is Triosephosphate isomerase.